Here is a 237-residue protein sequence, read N- to C-terminus: Small ribosomal subunit protein uS5 (237 aa).

The interval 1 to 59 (MADETNLEGVAAVEATGGEPQREGRGRGRGRGGNDRGGERGGRGRRDDRRGRGNNDEEG) is disordered. A compositionally biased stretch (basic and acidic residues) spans 20–55 (PQREGRGRGRGRGGNDRGGERGGRGRRDDRRGRGNN). The region spanning 63 to 126 (LIEKLVHINR…AAAKRAMVRV (64 aa)) is the S5 DRBM domain.

The protein belongs to the universal ribosomal protein uS5 family. In terms of assembly, part of the 30S ribosomal subunit. Contacts proteins S4 and S8.

Its function is as follows. With S4 and S12 plays an important role in translational accuracy. Located at the back of the 30S subunit body where it stabilizes the conformation of the head with respect to the body. The polypeptide is Small ribosomal subunit protein uS5 (Novosphingobium aromaticivorans (strain ATCC 700278 / DSM 12444 / CCUG 56034 / CIP 105152 / NBRC 16084 / F199)).